Reading from the N-terminus, the 130-residue chain is L-ectoine synthase (130 aa).

The protein belongs to the ectoine synthase family.

It catalyses the reaction (2S)-4-acetamido-2-aminobutanoate = L-ectoine + H2O. It functions in the pathway amine and polyamine biosynthesis; ectoine biosynthesis; L-ectoine from L-aspartate 4-semialdehyde: step 3/3. In terms of biological role, catalyzes the circularization of gamma-N-acetyl-alpha,gamma-diaminobutyric acid (ADABA) to ectoine (1,4,5,6-tetrahydro-2-methyl-4-pyrimidine carboxylic acid), which is an excellent osmoprotectant. This is L-ectoine synthase from Desulfatibacillum aliphaticivorans.